Here is a 317-residue protein sequence, read N- to C-terminus: MNQMWGSIEQYNTVVWHWPIAVYLFLAGLSAGAIISAIIIKWMKGNESSPWDGIIKAGALIAPLTIGAGLLLLIFDLTRPLHFWKLLIFYNFSSVMTLGVLALFAYFPVVLIFLLGVFKKELCDEGPFGFLAPLANIAYSMARPLEIVTFVLAIGVGAYTGFLLSAMYSYPLLNTPILPLLFLASGISAGISGNLLIGLLFFGKSTKGENVGYLHGLDFKVILFEAFLLFILFVGMYYQGGSTAEVAKAALTTGGLASLFWLGVAGMGLALPVVLNVALPHGIKHSSGFVMLNALIVLAGVMALRFYILYAGQTFVG.

8 consecutive transmembrane segments (helical) span residues 20-40 (IAVY…AIII), 54-75 (IIKA…LLIF), 98-118 (LGVL…LGVF), 147-167 (IVTF…LSAM), 182-202 (FLAS…LLFF), 221-237 (VILF…VGMY), 259-279 (LFWL…NVAL), and 289-309 (FVML…FYIL).

Belongs to the NrfD family. Functional polysulfide reductase is made up of three different (A, B, and C) subunits.

Its subcellular location is the cell inner membrane. Could possibly serve as the membrane anchor of the enzyme. Functionally, component of the phosphorylative electron transport system with polysulfide as the terminal acceptor. This Wolinella succinogenes (strain ATCC 29543 / DSM 1740 / CCUG 13145 / JCM 31913 / LMG 7466 / NCTC 11488 / FDC 602W) (Vibrio succinogenes) protein is Polysulfide reductase chain C (psrC).